The following is a 411-amino-acid chain: Putative competence-damage inducible protein (411 aa).

It belongs to the CinA family.

This is Putative competence-damage inducible protein from Desulforamulus reducens (strain ATCC BAA-1160 / DSM 100696 / MI-1) (Desulfotomaculum reducens).